We begin with the raw amino-acid sequence, 338 residues long: UDP-3-O-acylglucosamine N-acyltransferase (338 aa).

The active-site Proton acceptor is the His-251.

Belongs to the transferase hexapeptide repeat family. LpxD subfamily. Homotrimer.

It catalyses the reaction a UDP-3-O-[(3R)-3-hydroxyacyl]-alpha-D-glucosamine + a (3R)-hydroxyacyl-[ACP] = a UDP-2-N,3-O-bis[(3R)-3-hydroxyacyl]-alpha-D-glucosamine + holo-[ACP] + H(+). It functions in the pathway bacterial outer membrane biogenesis; LPS lipid A biosynthesis. In terms of biological role, catalyzes the N-acylation of UDP-3-O-acylglucosamine using 3-hydroxyacyl-ACP as the acyl donor. Is involved in the biosynthesis of lipid A, a phosphorylated glycolipid that anchors the lipopolysaccharide to the outer membrane of the cell. In Psychrobacter cryohalolentis (strain ATCC BAA-1226 / DSM 17306 / VKM B-2378 / K5), this protein is UDP-3-O-acylglucosamine N-acyltransferase.